A 409-amino-acid polypeptide reads, in one-letter code: DNA double-strand break repair protein Mre11 (409 aa).

4 residues coordinate Mn(2+): D9, H11, D50, and E85. The Proton donor role is filled by H86. Positions 170, 199, and 201 each coordinate Mn(2+).

The protein belongs to the MRE11/RAD32 family. Homodimer. Forms a heterotetramer composed of two Mre11 subunits and two Rad50 subunits. The cofactor is Mn(2+).

With respect to regulation, nuclease activity is regulated by Rad50. Part of the Rad50/Mre11 complex, which is involved in the early steps of DNA double-strand break (DSB) repair. The complex may facilitate opening of the processed DNA ends to aid in the recruitment of HerA and NurA. Mre11 binds to DSB ends and has both double-stranded 3'-5' exonuclease activity and single-stranded endonuclease activity. This chain is DNA double-strand break repair protein Mre11, found in Aeropyrum pernix (strain ATCC 700893 / DSM 11879 / JCM 9820 / NBRC 100138 / K1).